Consider the following 315-residue polypeptide: Olfactory receptor 3A2 (315 aa).

Residues 1–29 are Extracellular-facing; it reads MEPEAGTNRTAVAEFILLGLVQTEEMQPV. Asparagine 8 carries N-linked (GlcNAc...) asparagine glycosylation. The helical transmembrane segment at 30 to 52 threads the bilayer; the sequence is VFVLFLFAYLVTIGGNLSILAAI. Residues 53 to 60 lie on the Cytoplasmic side of the membrane; sequence LVEPKLHA. A helical transmembrane segment spans residues 61–82; it reads PMYFFLGNLSVLDVGCITVTVP. At 83–103 the chain is on the extracellular side; sequence AMLGRLLSHKSTISYDACLSQ. An intrachain disulfide couples cysteine 100 to cysteine 192. A helical membrane pass occupies residues 104 to 123; sequence LFFFHLLAGMDCFLLTAMAY. Topologically, residues 124–143 are cytoplasmic; that stretch reads DRFLAICWPLTYSTRMSQTV. A helical transmembrane segment spans residues 144–161; it reads QRMLVAASWACAFTNALT. The Extracellular portion of the chain corresponds to 162 to 199; that stretch reads HTVAMSTLNFCGPNEVNHFYCDLPQLFQLSCSSTQLNE. Residues 200–223 form a helical membrane-spanning segment; sequence LLLFAVGFIMAGTPLVLIITSYSH. Residues 224 to 240 are Cytoplasmic-facing; sequence VAAAVLRIRSVEGWKKA. A helical transmembrane segment spans residues 241 to 264; the sequence is FSTCGSHLTVVCLFFGTGIFNYMR. The Extracellular segment spans residues 265-275; that stretch reads LGSEEASDKDK. Residues 276–295 traverse the membrane as a helical segment; sequence GVGVFNTVINPMLNPLIYSL. At 296 to 315 the chain is on the cytoplasmic side; sequence RNPDVQGALWRIFLGRRSLT.

It belongs to the G-protein coupled receptor 1 family.

It is found in the cell membrane. Functionally, odorant receptor. The sequence is that of Olfactory receptor 3A2 (OR3A2) from Pan troglodytes (Chimpanzee).